A 287-amino-acid polypeptide reads, in one-letter code: Bifunctional protein FolD (287 aa).

NADP(+) contacts are provided by residues 171–173 (GHS) and isoleucine 237.

This sequence belongs to the tetrahydrofolate dehydrogenase/cyclohydrolase family. Homodimer.

The enzyme catalyses (6R)-5,10-methylene-5,6,7,8-tetrahydrofolate + NADP(+) = (6R)-5,10-methenyltetrahydrofolate + NADPH. The catalysed reaction is (6R)-5,10-methenyltetrahydrofolate + H2O = (6R)-10-formyltetrahydrofolate + H(+). It participates in one-carbon metabolism; tetrahydrofolate interconversion. Catalyzes the oxidation of 5,10-methylenetetrahydrofolate to 5,10-methenyltetrahydrofolate and then the hydrolysis of 5,10-methenyltetrahydrofolate to 10-formyltetrahydrofolate. The sequence is that of Bifunctional protein FolD from Methanosarcina barkeri (strain Fusaro / DSM 804).